The following is a 432-amino-acid chain: Adenylosuccinate synthetase (432 aa).

GTP contacts are provided by residues 13-19 (GDEGKGK) and 41-43 (GHT). The active-site Proton acceptor is the aspartate 14. The Mg(2+) site is built by aspartate 14 and glycine 41. IMP is bound by residues 14-17 (DEGK), 39-42 (NAGH), threonine 130, arginine 144, glutamine 225, threonine 240, and arginine 304. The Proton donor role is filled by histidine 42. A substrate-binding site is contributed by 300-306 (STTGRRR). GTP contacts are provided by residues arginine 306, 332–334 (KID), and 415–417 (STG).

This sequence belongs to the adenylosuccinate synthetase family. Homodimer. It depends on Mg(2+) as a cofactor.

It is found in the cytoplasm. The catalysed reaction is IMP + L-aspartate + GTP = N(6)-(1,2-dicarboxyethyl)-AMP + GDP + phosphate + 2 H(+). The protein operates within purine metabolism; AMP biosynthesis via de novo pathway; AMP from IMP: step 1/2. Plays an important role in the de novo pathway of purine nucleotide biosynthesis. Catalyzes the first committed step in the biosynthesis of AMP from IMP. This chain is Adenylosuccinate synthetase, found in Blochmanniella pennsylvanica (strain BPEN).